A 255-amino-acid chain; its full sequence is MIQIENQTVSGIPFLHIVKEENRHRAVPLVIFIHGFTSAKEHNLHIAYLLAEKGFRAVLPEALHHGERGEEMAVEELAGHFWDIVLNEIEEIGVLKNHFEKEGLIDGGRIGLAGTSMGGITTLGALTAYDWIKAGVSLMGSPNYVELFQQQIDHIQSQGIEIDVPEEKVQQLMKRLELRDLSLQPEKLQQRPLLFWHGAKDKVVPYAPTRKFYDTIKSHYSEQPERLQFIGDENADHKVPRAAVLKTIEWFETYL.

This Bacillus subtilis (strain 168) protein is Putative esterase YitV (yitV).